A 492-amino-acid chain; its full sequence is MTKVCPKTEEKRVVSEAVVEPISADVSFASNHFPTYKLGPDDQIVDEPDEDDKVPSVKDVVGKETGDLSDQHKKLSVRDLACKFDKNLAAASKLVDEAKLNDVTSLEGHVMLKKLRDALETMRGRMDGRNREAVEKAISMVEALAVKLTQNEGELIHDKFEVKKLASFLKKASDDAKKLVNQEKSFACAEIESARALVMKLGGAFEEQELCSKASRDQGPNVEKLVEEVQEARRIRRLHKPTMVIGMQHELRDLKSQIQEKSAYSVKLQREIAIIKKAEGSKSCPYVLDGAQSLGSCLRIRASSDSGIDISKCSIHWYRAASESSRREAISGANRSVYAPEPFDVGRVIQADIVSNGQKFTVTTDGPINTAAGLQSRVESLLRKSNSEFTVVISQMNGQDHASRSHVFTVGKARIKLSRGWITKAREIYSTSMQLCGVRGNANVPAKALFWQLRKGLTFLLTFESEQERNAAIVLARTYAYDCNVTLVGPDD.

The stretch at Leu-112–Glu-132 forms a coiled coil.

It belongs to the SCAB family. In terms of tissue distribution, expressed in roots, stems, leaves, siliques and flowers.

The protein resides in the cytoplasm. It localises to the cytoskeleton. Its function is as follows. Probable plant-specific actin binding protein that bundles and stabilizes microfilaments (MFs). The polypeptide is Stomatal closure-related actin-binding protein 2 (Arabidopsis thaliana (Mouse-ear cress)).